Consider the following 2549-residue polypeptide: Serine/threonine-protein kinase mTOR (2549 aa).

Met-1 carries the N-acetylmethionine modification. The segment at 1–651 is interaction with NBN; that stretch reads MLGTGPATAT…HVVSQTAVQV (651 aa). HEAT repeat units lie at residues 16–53, 55–99, 100–137, 138–179, 180–220, 222–276, 277–313, 314–364, 365–409, 410–445, 446–494, 495–529, 530–563, 564–596, 597–636, 637–683, 686–724, 727–766, 769–811, 814–853, 857–893, 894–942, 943–988, 989–1027, 1029–1068, 1069–1105, 1106–1144, 1145–1188, 1189–1225, 1226–1273, 1274–1311, and 1312–1345; these read SSNV…MELR, MSQE…VEGG, NSTR…AMAG, DTFT…AISV, PTFF…LILT, QREP…RISS, MEGE…PRHI, TPFT…CCRD, LMEE…AFTD, TQYL…VAVR, SEFK…RAMG, PGIQ…RQIP, QLKK…GLAH, QLAS…EFEG, HSLT…SIHL, ISGH…DERF, HLAQ…MNPA, MPFL…NAPR, RPYM…VSGL, RKWV…STGY, PYRK…LLGA, LDPY…GNLP, LDEF…KCVQ, FLPQ…KSHI, PYMD…GEFK, LYLP…LFGA, NLDD…RLTE, SLDF…GKKY, QIFI…LADE, EEDP…GAAR, RVSK…QAYN, and PMAR…ELAL. Ser-567 is modified (phosphoserine). Position 1162 is a phosphothreonine (Thr-1162). Lys-1218 carries the N6-acetyllysine modification. Residue Ser-1261 is modified to Phosphoserine. 16 TPR repeats span residues 1346–1382, 1383–1408, 1409–1442, 1443–1473, 1474–1507, 1508–1541, 1542–1574, 1575–1614, 1615–1649, 1650–1693, 1694–1731, 1732–1786, 1787–1846, 1898–1930, 1931–1970, and 1971–2005; these read TSQD…GIVL, LGER…QKGP, TPAI…HFGE, LEIQ…NKDD, PELM…VNDE, TQAK…RDTH, DGAF…LDAE, LTAM…RREI, IRQI…PHED, MRTW…PTVH, PQVT…AQHA, IATE…DRSW, YKAW…STEG, NNLQ…VKAI, QIDT…YHPQ, and ALIY…SNTL. One can recognise an FAT domain in the interval 1382 to 1982; it reads LLGERAAKCR…IYPLTVASKS (601 aa). Positions 1662, 1702, and 1749 each coordinate 1D-myo-inositol hexakisphosphate. The tract at residues 1812–1867 is disordered; it reads DEKKKLRHASGANITNATTTATTAASAAAATSTEGSNSESEAESNESSPTPSPLQK. A compositionally biased stretch (low complexity) spans 1826 to 1860; sequence TNATTTATTAASAAAATSTEGSNSESEAESNESSP. Positions 2012 to 2144 are sufficient for interaction with the FKBP1A/rapamycin complex; the sequence is VSEELIRVAI…DLELAVPGTY (133 aa). Lys-2066 is covalently cross-linked (Glycyl lysine isopeptide (Lys-Gly) (interchain with G-Cter in ubiquitin)). The 314-residue stretch at 2156 to 2469 folds into the PI3K/PI4K catalytic domain; that stretch reads IAPSLQVITS…GVELGEPAHK (314 aa). Phosphoserine is present on Ser-2159. The G-loop stretch occupies residues 2162–2168; sequence VITSKQR. Residue Thr-2164 is modified to Phosphothreonine. 2 residues coordinate ATP: Ser-2165 and Gln-2167. Thr-2173 bears the Phosphothreonine; by PKB/AKT1 mark. Leu-2185, Lys-2187, Glu-2190, Tyr-2225, Gly-2238, Trp-2239, Val-2240, and Thr-2245 together coordinate ATP. Residues 2258–2296 are interaction with MLST8; the sequence is KILLNIEHRIMLRMAPDYDHLTLMQKVEVFEHAVNNTAG. Residues 2335 to 2343 form a catalytic loop region; the sequence is GLGDRHPSN. Asn-2343 contributes to the Mg(2+) binding site. Positions 2345 and 2356 each coordinate ATP. An activation loop region spans residues 2355–2380; the sequence is HIDFGDCFEVAMTREKFPEKIPFRLT. A Mg(2+)-binding site is contributed by Asp-2357. A Phosphothreonine; by RPS6KB1 modification is found at Thr-2446. Phosphoserine; by RPS6KB1 is present on Ser-2448. Ser-2478 is subject to Phosphoserine. At Ser-2481 the chain carries Phosphoserine; by autocatalysis. Positions 2517 to 2549 constitute an FATC domain; the sequence is DTLDVPTQVELLIKQATSHENLCQCYIGWCPFW.

It belongs to the PI3/PI4-kinase family. As to quaternary structure, part of the mechanistic target of rapamycin complex 1 (mTORC1) which contains MTOR, MLST8 and RPTOR. The mTORC1 complex is a 1 Md obligate dimer of two stoichiometric heterotetramers with overall dimensions of 290 A x 210 A x 135 A. It has a rhomboid shape and a central cavity, the dimeric interfaces are formed by interlocking interactions between the two MTOR and the two RPTOR subunits. The MLST8 subunit forms distal foot-like protuberances, and contacts only one MTOR within the complex, while the small AKT1S1/PRAS40 localizes to the midsection of the central core, in close proximity to RPTOR. mTORC1 associates with AKT1S1/PRAS40, which inhibits its activity by blocking MTOR substrate-recruitment site. Component of the mechanistic target of rapamycin complex 2 (mTORC2), consisting in two heterotretramers composed of MTOR, MLST8, RICTOR and MAPKAP1/SIN1. Interacts with PLPP7 and PML. Interacts with PRR5 and RICTOR; the interaction is direct within the mTORC2 complex and interaction with RICTOR is enhanced by deubiquitination of RICTOR by USP9X. mTORC1 and mTORC2 associate with DEPTOR, which regulates their activity. Interacts with WAC; WAC positively regulates MTOR activity by promoting the assembly of the TTT complex composed of TELO2, TTI1 and TTI2 and the RUVBL complex composed of RUVBL1 and RUVBL2 into the TTT-RUVBL complex which leads to the dimerization of the mTORC1 complex and its subsequent activation. Interacts with UBQLN1. Interacts with TTI1 and TELO2. Interacts with CLIP1; phosphorylates and regulates CLIP1. Interacts with NBN. Interacts with HTR6. Interacts with BRAT1. Interacts with MEAK7 (via C-terminal domain); the interaction increases upon nutrient stimulation. Interacts with TM4SF5; the interaction is positively regulated by arginine and is negatively regulated by leucine. Interacts with GPR137B. Interacts with NCKAP1L. Interacts with TPCN1 and TPCN2; the interaction is required for TPCN1 and TPCN2 sensitivity to ATP. Interacts with ATP6V1A and with CRYAB, forming a ternary complex. Interacts with SLC38A7; this interaction mediates the recruitment of mTORC1 to the lysosome and its subsequent activation. Interacts with TSPAN8. In terms of processing, autophosphorylates when part of mTORC1 or mTORC2. Phosphorylation at Ser-1261, Ser-2159 and Thr-2164 promotes autophosphorylation. Phosphorylated at Ser-2448 by RPS6KB1. Phosphorylation in the kinase domain modulates the interactions of MTOR with RPTOR and AKT1S1/PRAS40 and leads to increased intrinsic mTORC1 kinase activity. Phosphorylation at Ser-2159 by TBK1 in response to growth factors and pathogen recognition receptors promotes mTORC1 activity. Phosphorylation at Ser-2159 by TBK1 in response to EGF growth factor promotes mTORC2 activity, leading to AKT1 phosphorylation and activation. Phosphorylation at Thr-2173 in the ATP-binding region by AKT1 strongly reduces kinase activity. Post-translationally, ubiquitinated at Lys-2066 by the SCF(FBXO22) complex via 'Lys-27'-linked ubiquitination prevents mTORC1 substrate recruitment.

It localises to the lysosome membrane. The protein resides in the endoplasmic reticulum membrane. Its subcellular location is the golgi apparatus membrane. It is found in the cell membrane. The protein localises to the mitochondrion outer membrane. It localises to the cytoplasm. The protein resides in the nucleus. Its subcellular location is the PML body. It is found in the microsome membrane. The protein localises to the cytoplasmic vesicle. It localises to the phagosome. The catalysed reaction is L-seryl-[protein] + ATP = O-phospho-L-seryl-[protein] + ADP + H(+). The enzyme catalyses L-threonyl-[protein] + ATP = O-phospho-L-threonyl-[protein] + ADP + H(+). It carries out the reaction L-tyrosyl-[protein] + ATP = O-phospho-L-tyrosyl-[protein] + ADP + H(+). The mTORC1 complex is activated in response to nutrients, growth factors or amino acids: activation requires relocalization of the mTORC1 complex to lysosomes that is mediated by the Ragulator complex, SLC38A9, and the Rag GTPases RagA/RRAGA, RagB/RRAGB, RagC/RRAGC and RagD/RRAGD. Activation of mTORC1 by growth factors such as insulin involves AKT1-mediated phosphorylation of TSC1-TSC2, which leads to the activation of the RHEB GTPase a potent activator of the protein kinase activity of mTORC1. Insulin-stimulated and amino acid-dependent phosphorylation at Ser-1261 promotes autophosphorylation and the activation of mTORC1. On the other hand, low cellular energy levels can inhibit mTORC1 through activation of PRKAA1 while hypoxia inhibits mTORC1 through a REDD1-dependent mechanism which may also require PRKAA1. The kinase activity of MTOR within the mTORC1 complex is positively regulated by MLST8. The kinase activity of MTOR is inhibited by DEPTOR and AKT1S1. The non-canonical mTORC1 complex is independent of the RHEB GTPase and specifically mediates phosphorylation of MiT/TFE factors TFEB and TFE3 but not other mTORC1 substrates: it is activated by FLCN, which activates Rag GTPases RagC/RRAGC and RagD/RRAGD. MTOR is the target of the immunosuppressive and anti-cancer drug rapamycin which acts in complex with FKBP1A/FKBP12, and specifically inhibits its kinase activity. mTORC2 is also activated by growth factors, but seems to be nutrient-insensitive. mTORC2 associates and is directly activated by ribosomes. mTORC2 may also be regulated by RHEB but in an indirect manner through the PI3K signaling pathway. Functionally, serine/threonine protein kinase which is a central regulator of cellular metabolism, growth and survival in response to hormones, growth factors, nutrients, energy and stress signals. MTOR directly or indirectly regulates the phosphorylation of at least 800 proteins. Functions as part of 2 structurally and functionally distinct signaling complexes mTORC1 and mTORC2 (mTOR complex 1 and 2). In response to nutrients, growth factors or amino acids, mTORC1 is recruited to the lysosome membrane and promotes protein, lipid and nucleotide synthesis by phosphorylating key regulators of mRNA translation and ribosome synthesis. This includes phosphorylation of EIF4EBP1 and release of its inhibition toward the elongation initiation factor 4E (eiF4E). Moreover, phosphorylates and activates RPS6KB1 and RPS6KB2 that promote protein synthesis by modulating the activity of their downstream targets including ribosomal protein S6, eukaryotic translation initiation factor EIF4B, and the inhibitor of translation initiation PDCD4. Stimulates the pyrimidine biosynthesis pathway, both by acute regulation through RPS6KB1-mediated phosphorylation of the biosynthetic enzyme CAD, and delayed regulation, through transcriptional enhancement of the pentose phosphate pathway which produces 5-phosphoribosyl-1-pyrophosphate (PRPP), an allosteric activator of CAD at a later step in synthesis, this function is dependent on the mTORC1 complex. Regulates ribosome synthesis by activating RNA polymerase III-dependent transcription through phosphorylation and inhibition of MAF1 an RNA polymerase III-repressor. Activates dormant ribosomes by mediating phosphorylation of SERBP1, leading to SERBP1 inactivation and reactivation of translation. In parallel to protein synthesis, also regulates lipid synthesis through SREBF1/SREBP1 and LPIN1. To maintain energy homeostasis mTORC1 may also regulate mitochondrial biogenesis through regulation of PPARGC1A. In the same time, mTORC1 inhibits catabolic pathways: negatively regulates autophagy through phosphorylation of ULK1. Under nutrient sufficiency, phosphorylates ULK1 at 'Ser-758', disrupting the interaction with AMPK and preventing activation of ULK1. Also prevents autophagy through phosphorylation of the autophagy inhibitor DAP. Also prevents autophagy by phosphorylating RUBCNL/Pacer under nutrient-rich conditions. Prevents autophagy by mediating phosphorylation of AMBRA1, thereby inhibiting AMBRA1 ability to mediate ubiquitination of ULK1 and interaction between AMBRA1 and PPP2CA. mTORC1 exerts a feedback control on upstream growth factor signaling that includes phosphorylation and activation of GRB10 a INSR-dependent signaling suppressor. Among other potential targets mTORC1 may phosphorylate CLIP1 and regulate microtubules. The mTORC1 complex is inhibited in response to starvation and amino acid depletion. The non-canonical mTORC1 complex, which acts independently of RHEB, specifically mediates phosphorylation of MiT/TFE factors TFEB and TFE3 in the presence of nutrients, promoting their cytosolic retention and inactivation. Upon starvation or lysosomal stress, inhibition of mTORC1 induces dephosphorylation and nuclear translocation of TFEB and TFE3, promoting their transcription factor activity. The mTORC1 complex regulates pyroptosis in macrophages by promoting GSDMD oligomerization. MTOR phosphorylates RPTOR which in turn inhibits mTORC1. As part of the mTORC2 complex, MTOR transduces signals from growth factors to pathways involved in proliferation, cytoskeletal organization, lipogenesis and anabolic output. In response to growth factors, mTORC2 phosphorylates and activates AGC protein kinase family members, including AKT (AKT1, AKT2 and AKT3), PKC (PRKCA, PRKCB and PRKCE) and SGK1. In contrast to mTORC1, mTORC2 is nutrient-insensitive. mTORC2 plays a critical role in AKT1 activation by mediating phosphorylation of different sites depending on the context, such as 'Thr-450', 'Ser-473', 'Ser-477' or 'Thr-479', facilitating the phosphorylation of the activation loop of AKT1 on 'Thr-308' by PDPK1/PDK1 which is a prerequisite for full activation. mTORC2 also regulates the phosphorylation of SGK1 at 'Ser-422'. mTORC2 may regulate the actin cytoskeleton, through phosphorylation of PRKCA, PXN and activation of the Rho-type guanine nucleotide exchange factors RHOA and RAC1A or RAC1B. The mTORC2 complex also phosphorylates various proteins involved in insulin signaling, such as FBXW8 and IGF2BP1. May also regulate insulin signaling by acting as a tyrosine protein kinase that catalyzes phosphorylation of IGF1R and INSR. Regulates osteoclastogenesis by adjusting the expression of CEBPB isoforms. Plays an important regulatory role in the circadian clock function; regulates period length and rhythm amplitude of the suprachiasmatic nucleus (SCN) and liver clocks. In Rattus norvegicus (Rat), this protein is Serine/threonine-protein kinase mTOR.